The chain runs to 617 residues: 5-hydroxytryptamine receptor 2B (617 aa).

Residues 1-95 (MLKTVTTAMA…LLVKMIAMAV (95 aa)) lie on the Extracellular side of the membrane. Asparagine 31, asparagine 41, asparagine 51, and asparagine 58 each carry an N-linked (GlcNAc...) asparagine glycan. The helical transmembrane segment at 96–116 (VLGLMILVTIIGNVFVIAAII) threads the bilayer. Residues 117 to 128 (LERNLQNVANYL) are Cytoplasmic-facing. The helical transmembrane segment at 129–149 (VASLAVADLFVACLVMPLGAV) threads the bilayer. The Extracellular portion of the chain corresponds to 150-164 (YEISNGWILGPELCD). Cysteines 163 and 242 form a disulfide. Residues 165–185 (IWTSCDVLCCTASILHLVAIA) traverse the membrane as a helical segment. Topologically, residues 186 to 205 (ADRYWTVTNIDYNNLRTPRR) are cytoplasmic. A helical transmembrane segment spans residues 206 to 226 (VFLMIFCVWFAALIVSLAPQF). Residues 227-256 (GWKDPDYMKRIEEQHCMVSQDVGYQIFATC) lie on the Extracellular side of the membrane. The chain crosses the membrane as a helical span at residues 257–277 (CTFYVPLLVILFLYWKIYIIA). The Cytoplasmic segment spans residues 278-534 (RKRIQRRAQK…EAKRERKAAQ (257 aa)). Positions 309 to 336 (RSKRRAERKRLEAGERTPVDGDGTGGQL) are disordered. Positions 317 to 327 (KRLEAGERTPV) are enriched in basic and acidic residues. A helical transmembrane segment spans residues 535–555 (TLAIITGAFVICWLPFFVMAL). The Extracellular portion of the chain corresponds to 556-570 (TMSLCKECEIHTAVA). The helical transmembrane segment at 571-591 (SLFLWLGYFNSTLNPVIYTIF) threads the bilayer. Over 592–617 (NPEFRRAFKRILFGRKAAARARSAKI) the chain is Cytoplasmic.

This sequence belongs to the G-protein coupled receptor 1 family.

The protein resides in the cell membrane. Functionally, this is one of the several different receptors for 5-hydroxytryptamine (serotonin), a biogenic hormone that functions as a neurotransmitter, a hormone, and a mitogen. The activity of this receptor is mediated by G proteins which inhibit adenylate cyclase. In Drosophila melanogaster (Fruit fly), this protein is 5-hydroxytryptamine receptor 2B (5-HT1B).